Here is a 392-residue protein sequence, read N- to C-terminus: Protein FAM53C (392 aa).

N-acetylmethionine is present on methionine 1. The tract at residues 78-119 (LRPPSRGNSPKEQPFSQVLRPEPPDPEKLPVPPAPPSKRHCR) is disordered. Positions 83-93 (RGNSPKEQPFS) are enriched in polar residues. Phosphoserine occurs at positions 122, 162, 232, 234, 255, and 273. Disordered regions lie at residues 141 to 167 (LWTPIKHRGSGGGGGPQVPHQSPPKRV) and 204 to 294 (RPCA…EDPR). Residues 241 to 256 (ASRFLPSARSSPASSP) show a composition bias toward low complexity. The span at 278–294 (LDARKTGVKRRHEEDPR) shows a compositional bias: basic and acidic residues. The residue at position 299 (serine 299) is a Phosphoserine. The disordered stretch occupies residues 341–364 (ASCSPTGGSSQVLSESEEEEEGAV).

The protein belongs to the FAM53 family.

The protein is Protein FAM53C of Homo sapiens (Human).